The primary structure comprises 453 residues: uncharacterized protein (453 aa).

[4Fe-4S] cluster contacts are provided by Cys74, Cys80, Cys83, and Cys162. Residues Gln286, Tyr315, Glu336, and Asp384 each coordinate S-adenosyl-L-methionine. Cys411 functions as the Nucleophile in the catalytic mechanism.

The protein belongs to the class I-like SAM-binding methyltransferase superfamily. RNA M5U methyltransferase family.

This is an uncharacterized protein from Staphylococcus aureus (strain COL).